The chain runs to 247 residues: MNVLPCSVNTLKGLYDISGVEVGQHFYWQIGGFQVHAQVLITSWFVIAILLGSAIIAVRNPQTIPTDGQNFFEYVLEFIRDLSKTQIGEEYGPWVPFIGTMFLFIFVSNWSGALLPWKIIQLPHGELAAPTNDINTTVALALPTSVAYFYAGLTKKGLGYFGKYIQPTPILLPINILEDFTKPLSLSFRLFGNILADELVVVVLVSLVPSVVPIPVMFLGLFTSGIQALIFATLAAAYIGESMEGHH.

5 helical membrane passes run 38–58, 95–115, 134–154, 199–219, and 220–240; these read QVLI…IIAV, VPFI…GALL, INTT…AGLT, LVVV…VMFL, and GLFT…AYIG.

It belongs to the ATPase A chain family. As to quaternary structure, F-type ATPases have 2 components, CF(1) - the catalytic core - and CF(0) - the membrane proton channel. CF(1) has five subunits: alpha(3), beta(3), gamma(1), delta(1), epsilon(1). CF(0) has four main subunits: a, b, b' and c.

It is found in the plastid. The protein localises to the chloroplast thylakoid membrane. Key component of the proton channel; it plays a direct role in the translocation of protons across the membrane. The polypeptide is ATP synthase subunit a, chloroplastic (Ranunculus macranthus (Large buttercup)).